The chain runs to 227 residues: Phosphatidylethanolamine-binding protein 4 (227 aa).

The signal sequence occupies residues 1–22 (MGWTMRLVTAALLLGLMMVVTG). N-linked (GlcNAc...) (complex) asparagine glycosylation occurs at N169. Positions 188-227 (EPEASTQFMTQNYQDSPTLQAPRERASEPKHKNQAEIAAC) are important for secretion. Residues 202-227 (DSPTLQAPRERASEPKHKNQAEIAAC) are disordered. Basic and acidic residues predominate over residues 209 to 221 (PRERASEPKHKNQ).

Belongs to the phosphatidylethanolamine-binding protein family.

It localises to the secreted. Functionally, promotes AKT phosphorylation, suggesting a possible role in the PI3K-AKT signaling pathway. This Homo sapiens (Human) protein is Phosphatidylethanolamine-binding protein 4 (PEBP4).